A 196-amino-acid polypeptide reads, in one-letter code: Lipoprotein signal peptidase (196 aa).

The next 3 helical transmembrane spans lie at 43–63 (LMLK…GISF), 75–95 (AVFI…MVCS), and 100–120 (GFAG…DRLF). Residues Asp126 and Asp144 contribute to the active site. A helical transmembrane segment spans residues 135–155 (YSFPVFNLADCFITIGVIILI).

This sequence belongs to the peptidase A8 family.

It is found in the cell inner membrane. It carries out the reaction Release of signal peptides from bacterial membrane prolipoproteins. Hydrolyzes -Xaa-Yaa-Zaa-|-(S,diacylglyceryl)Cys-, in which Xaa is hydrophobic (preferably Leu), and Yaa (Ala or Ser) and Zaa (Gly or Ala) have small, neutral side chains.. The protein operates within protein modification; lipoprotein biosynthesis (signal peptide cleavage). This protein specifically catalyzes the removal of signal peptides from prolipoproteins. This Rickettsia canadensis (strain McKiel) protein is Lipoprotein signal peptidase.